The primary structure comprises 461 residues: MLKIFNTLSRQKEEFKPIHAGQVGMYVCGITVYDLCHIGHGRTFVAFDVVARYLRYLGYSLKYVRNVTDIDDKIIKRAAENGETSDQLTTRMIAEMHADFDALNILRPDAEPRATHHITDIIEMVETLIARRHAYVASNGDVMFSVDTAPGYGVLSRQDLDQLQAGARVEITEVKRNPMDFVLWKMSKPGEPHWSSPWGEGRPGWHIECSAMNCKQLGEHFDIHGGGSDLMFPHHENEIAQSSCAHDGPYVNYWMHSGMVMVDREKMSKSLNNFFTVRDVLAYYDPETVRYFLMSGHYRSQLNYSEDNLKQARAALERLYTALRGTDPDAAAQGGDEFEGRFREAMDDDFNTPEAYSVLFDMAREVNRLKTEDAQAANQLASALRKLSGVLGLLEQDPEQFLQNGAQVDNDEVKEIEALIQQRKDARAAKDWALADQARDRLNEMGIVLEDGPQGTIWRRK.

C28 contacts Zn(2+). Residues 30–40 (ITVYDLCHIGH) carry the 'HIGH' region motif. Zn(2+)-binding residues include C209, H234, and E238. The 'KMSKS' region motif lies at 266–270 (KMSKS). K269 is a binding site for ATP.

It belongs to the class-I aminoacyl-tRNA synthetase family. As to quaternary structure, monomer. The cofactor is Zn(2+).

Its subcellular location is the cytoplasm. It catalyses the reaction tRNA(Cys) + L-cysteine + ATP = L-cysteinyl-tRNA(Cys) + AMP + diphosphate. This is Cysteine--tRNA ligase from Pectobacterium carotovorum subsp. carotovorum (strain PC1).